The following is a 345-amino-acid chain: S-adenosylmethionine:tRNA ribosyltransferase-isomerase (345 aa).

Belongs to the QueA family. As to quaternary structure, monomer.

It localises to the cytoplasm. It carries out the reaction 7-aminomethyl-7-carbaguanosine(34) in tRNA + S-adenosyl-L-methionine = epoxyqueuosine(34) in tRNA + adenine + L-methionine + 2 H(+). The protein operates within tRNA modification; tRNA-queuosine biosynthesis. In terms of biological role, transfers and isomerizes the ribose moiety from AdoMet to the 7-aminomethyl group of 7-deazaguanine (preQ1-tRNA) to give epoxyqueuosine (oQ-tRNA). The polypeptide is S-adenosylmethionine:tRNA ribosyltransferase-isomerase (Anaeromyxobacter sp. (strain Fw109-5)).